Reading from the N-terminus, the 251-residue chain is Type III pantothenate kinase (251 aa).

6–13 (DCGNSFIK) contributes to the ATP binding site. Substrate is bound by residues Tyr-93 and 100 to 103 (GLDR). The Proton acceptor role is filled by Asp-102. Asp-122 provides a ligand contact to K(+). Position 125 (Thr-125) interacts with ATP. Thr-182 provides a ligand contact to substrate.

The protein belongs to the type III pantothenate kinase family. As to quaternary structure, homodimer. It depends on NH4(+) as a cofactor. K(+) is required as a cofactor.

It localises to the cytoplasm. It carries out the reaction (R)-pantothenate + ATP = (R)-4'-phosphopantothenate + ADP + H(+). It participates in cofactor biosynthesis; coenzyme A biosynthesis; CoA from (R)-pantothenate: step 1/5. In terms of biological role, catalyzes the phosphorylation of pantothenate (Pan), the first step in CoA biosynthesis. This Azotobacter vinelandii (strain DJ / ATCC BAA-1303) protein is Type III pantothenate kinase.